We begin with the raw amino-acid sequence, 248 residues long: Tyrosine recombinase XerD-like (248 aa).

The region spanning 1 to 72 is the Core-binding (CB) domain; that stretch reads MKSYIEPFIA…TANQFLYYLY (72 aa). Residues 85-248 form the Tyr recombinase domain; it reads DTMKVMRTEK…PVTLEKYYKS (164 aa). Active-site residues include Lys149 and Arg213. The active-site O-(3'-phospho-DNA)-tyrosine intermediate is Tyr245.

The protein belongs to the 'phage' integrase family. XerD-like subfamily.

It localises to the cytoplasm. Its function is as follows. Putative tyrosine recombinase. Not involved in the cutting and rejoining of the recombining DNA molecules on dif(SL) site. The chain is Tyrosine recombinase XerD-like from Streptococcus pyogenes serotype M3 (strain ATCC BAA-595 / MGAS315).